The chain runs to 123 residues: Small ribosomal subunit protein eS25 (123 aa).

The segment covering M1–K13 has biased composition (basic and acidic residues). The disordered stretch occupies residues M1–G34. Residues K25–G34 are compositionally biased toward basic residues.

Belongs to the eukaryotic ribosomal protein eS25 family.

The chain is Small ribosomal subunit protein eS25 (RPS25) from Branchiostoma belcheri (Amphioxus).